A 262-amino-acid chain; its full sequence is Protein N-terminal and lysine N-methyltransferase EFM7 (262 aa).

S-adenosyl-L-methionine is bound by residues Trp-59, 86–88 (GAA), Asp-108, Trp-143, and Ser-171.

Belongs to the class I-like SAM-binding methyltransferase superfamily. EFM7 family.

Its subcellular location is the cytoplasm. Functionally, S-adenosyl-L-methionine-dependent protein methyltransferase that trimethylates the N-terminal glycine 'Gly-2' of elongation factor 1-alpha, before also catalyzing the mono- and dimethylation of 'Lys-3'. This is Protein N-terminal and lysine N-methyltransferase EFM7 from Candida albicans (strain SC5314 / ATCC MYA-2876) (Yeast).